Reading from the N-terminus, the 357-residue chain is Olfactory receptor 2B2 (357 aa).

Residues 1–25 (MNWVNKSVPQEFILLVFSDQPWLEI) lie on the Extracellular side of the membrane. The N-linked (GlcNAc...) asparagine glycan is linked to Asn-5. The helical transmembrane segment at 26–49 (PPFVMFLFSYILTIFGNLTIILVS) threads the bilayer. The Cytoplasmic portion of the chain corresponds to 50 to 57 (HVDFKLHT). The helical transmembrane segment at 58–79 (PMYFFLSNLSLLDLCYTTSTVP) threads the bilayer. Over 80-100 (QMLVNICNTRKVISYGGCVAQ) the chain is Extracellular. A disulfide bridge links Cys-97 with Cys-189. Residues 101-120 (LFIFLALGSTECLLLAVMCF) traverse the membrane as a helical segment. Residues 121 to 139 (DRFVAICRPLHYSIIMHQR) are Cytoplasmic-facing. Residues 140–158 (LCFQLAAASWISGFSNSVL) form a helical membrane-spanning segment. At 159–195 (QSTWTLKMPLCGHKEVDHFFCEVPALLKLSCVDTTAN) the chain is on the extracellular side. The chain crosses the membrane as a helical span at residues 196–219 (EAELFFISVLFLLIPVTLILISYA). Residues 220–236 (FIVQAVLRIQSAEGQRK) lie on the Cytoplasmic side of the membrane. The helical transmembrane segment at 237-259 (AFGTCGSHLIVVSLFYGTAISMY) threads the bilayer. The Extracellular segment spans residues 260-272 (LQPPSPSSKDRGK). The chain crosses the membrane as a helical span at residues 273–292 (MVSLFCGIIAPMLNPLIYTL). Topologically, residues 293–357 (RNKEVKEAFK…YCNLPQRKFP (65 aa)) are cytoplasmic.

Belongs to the G-protein coupled receptor 1 family.

The protein resides in the cell membrane. Its function is as follows. Odorant receptor. The chain is Olfactory receptor 2B2 (OR2B2) from Homo sapiens (Human).